The following is a 72-amino-acid chain: Translation initiation factor IF-1 (72 aa).

The region spanning 1–72 (MSKEEAIEVE…TRGRITYRAK (72 aa)) is the S1-like domain.

The protein belongs to the IF-1 family. As to quaternary structure, component of the 30S ribosomal translation pre-initiation complex which assembles on the 30S ribosome in the order IF-2 and IF-3, IF-1 and N-formylmethionyl-tRNA(fMet); mRNA recruitment can occur at any time during PIC assembly.

The protein resides in the cytoplasm. Its function is as follows. One of the essential components for the initiation of protein synthesis. Stabilizes the binding of IF-2 and IF-3 on the 30S subunit to which N-formylmethionyl-tRNA(fMet) subsequently binds. Helps modulate mRNA selection, yielding the 30S pre-initiation complex (PIC). Upon addition of the 50S ribosomal subunit IF-1, IF-2 and IF-3 are released leaving the mature 70S translation initiation complex. The polypeptide is Translation initiation factor IF-1 (Geobacter sulfurreducens (strain ATCC 51573 / DSM 12127 / PCA)).